We begin with the raw amino-acid sequence, 376 residues long: 23S rRNA (uracil(747)-C(5))-methyltransferase RlmC (376 aa).

The [4Fe-4S] cluster site is built by Cys-3, Cys-11, Cys-14, and Cys-88. Residues Gln-213, Phe-242, Glu-263, and Asn-308 each coordinate S-adenosyl-L-methionine. Cys-335 (nucleophile) is an active-site residue.

It belongs to the class I-like SAM-binding methyltransferase superfamily. RNA M5U methyltransferase family. RlmC subfamily.

It catalyses the reaction uridine(747) in 23S rRNA + S-adenosyl-L-methionine = 5-methyluridine(747) in 23S rRNA + S-adenosyl-L-homocysteine + H(+). In terms of biological role, catalyzes the formation of 5-methyl-uridine at position 747 (m5U747) in 23S rRNA. The polypeptide is 23S rRNA (uracil(747)-C(5))-methyltransferase RlmC (Vibrio vulnificus (strain YJ016)).